Consider the following 273-residue polypeptide: Pyrroline-5-carboxylate reductase (273 aa).

It belongs to the pyrroline-5-carboxylate reductase family.

It is found in the cytoplasm. The catalysed reaction is L-proline + NADP(+) = (S)-1-pyrroline-5-carboxylate + NADPH + 2 H(+). The enzyme catalyses L-proline + NAD(+) = (S)-1-pyrroline-5-carboxylate + NADH + 2 H(+). Its pathway is amino-acid biosynthesis; L-proline biosynthesis; L-proline from L-glutamate 5-semialdehyde: step 1/1. This chain is Pyrroline-5-carboxylate reductase (PROC), found in Pisum sativum (Garden pea).